A 130-amino-acid chain; its full sequence is Small ribosomal subunit protein uS9 (130 aa).

This sequence belongs to the universal ribosomal protein uS9 family.

This Thioalkalivibrio sulfidiphilus (strain HL-EbGR7) protein is Small ribosomal subunit protein uS9.